The following is a 619-amino-acid chain: Chaperone protein HscA homolog (619 aa).

It belongs to the heat shock protein 70 family.

Its function is as follows. Chaperone involved in the maturation of iron-sulfur cluster-containing proteins. Has a low intrinsic ATPase activity which is markedly stimulated by HscB. The protein is Chaperone protein HscA homolog of Shewanella frigidimarina (strain NCIMB 400).